We begin with the raw amino-acid sequence, 344 residues long: Aurora kinase B (344 aa).

Position 35 is a phosphothreonine (Thr35). Ser62 carries the post-translational modification Phosphoserine. Thr64 carries the phosphothreonine modification. The Protein kinase domain maps to 77 to 327 (FEIGRPLGKG…LAQVSAHPWV (251 aa)). Residues 83–91 (LGKGKFGNV) and Lys106 each bind ATP. Asp200 acts as the Proton acceptor in catalysis. An N6-acetyllysine modification is found at Lys215. Ser227 carries the phosphoserine modification. Thr232 is subject to Phosphothreonine; by autocatalysis.

Belongs to the protein kinase superfamily. Ser/Thr protein kinase family. Aurora subfamily. Component of the chromosomal passenger complex (CPC) composed of at least BIRC5/survivin, CDCA8/borealin, INCENP, AURKB or AURKC; predominantly independent AURKB- and AURKC-containing complexes exist. Associates with RACGAP1 during M phase. Interacts with SPDYC; this interaction may be required for proper localization of active, Thr-232-phosphorylated AURKB form during prometaphase and metaphase. Interacts with p53/TP53. Interacts (via the middle kinase domain) with NOC2L (via the N- and C-terminus domains). Interacts with CDCA1. Interacts with EVI5. Interacts with JTB. Interacts with NDC80. Interacts with PSMA3. Interacts with RNF2/RING1B. Interacts with SEPTIN1. Interacts with SIRT2. Interacts with TACC1. Interacts with TTC28. The phosphorylation of Thr-232 requires the binding to INCENP and occurs by means of an autophosphorylation mechanism. Thr-232 phosphorylation is indispensable for the AURKB kinase activity. Post-translationally, acetylated at Lys-215 by KAT5 at kinetochores, increasing AURKB activity and promoting accurate chromosome segregation in mitosis. In terms of processing, ubiquitinated by different BCR (BTB-CUL3-RBX1) E3 ubiquitin ligase complexes. Ubiquitinated by the BCR(KLHL9-KLHL13) E3 ubiquitin ligase complex, ubiquitination leads to removal from mitotic chromosomes and is required for cytokinesis. During anaphase, the BCR(KLHL21) E3 ubiquitin ligase complex recruits the CPC complex from chromosomes to the spindle midzone and mediates the ubiquitination of AURKB. Ubiquitination of AURKB by BCR(KLHL21) E3 ubiquitin ligase complex may not lead to its degradation by the proteasome. Deubiquitinated by USP35; inhibiting CDH1-mediated degradation of AURKB.

Its subcellular location is the nucleus. It is found in the chromosome. The protein localises to the centromere. It localises to the kinetochore. The protein resides in the cytoplasm. Its subcellular location is the cytoskeleton. It is found in the spindle. The protein localises to the midbody. The enzyme catalyses L-seryl-[protein] + ATP = O-phospho-L-seryl-[protein] + ADP + H(+). The catalysed reaction is L-threonyl-[protein] + ATP = O-phospho-L-threonyl-[protein] + ADP + H(+). With respect to regulation, activity is greatly increased when AURKB is within the CPC complex. In particular, AURKB-phosphorylated INCENP acts as an activator of AURKB. Positive feedback between HASPIN and AURKB contributes to CPC localization. Functionally, serine/threonine-protein kinase component of the chromosomal passenger complex (CPC), a complex that acts as a key regulator of mitosis. The CPC complex has essential functions at the centromere in ensuring correct chromosome alignment and segregation and is required for chromatin-induced microtubule stabilization and spindle assembly. Involved in the bipolar attachment of spindle microtubules to kinetochores and is a key regulator for the onset of cytokinesis during mitosis. Required for central/midzone spindle assembly and cleavage furrow formation. Key component of the cytokinesis checkpoint, a process required to delay abscission to prevent both premature resolution of intercellular chromosome bridges and accumulation of DNA damage: phosphorylates CHMP4C, leading to retain abscission-competent VPS4 (VPS4A and/or VPS4B) at the midbody ring until abscission checkpoint signaling is terminated at late cytokinesis. AURKB phosphorylates the CPC complex subunits BIRC5/survivin, CDCA8/borealin and INCENP. Phosphorylation of INCENP leads to increased AURKB activity. Other known AURKB substrates involved in centromeric functions and mitosis are CENPA, DES/desmin, GPAF, KIF2C, NSUN2, RACGAP1, SEPTIN1, VIM/vimentin, HASPIN, and histone H3. A positive feedback loop involving HASPIN and AURKB contributes to localization of CPC to centromeres. Phosphorylation of VIM controls vimentin filament segregation in cytokinetic process, whereas histone H3 is phosphorylated at 'Ser-10' and 'Ser-28' during mitosis (H3S10ph and H3S28ph, respectively). AURKB is also required for kinetochore localization of BUB1 and SGO1. Phosphorylation of p53/TP53 negatively regulates its transcriptional activity. Key regulator of active promoters in resting B- and T-lymphocytes: acts by mediating phosphorylation of H3S28ph at active promoters in resting B-cells, inhibiting RNF2/RING1B-mediated ubiquitination of histone H2A and enhancing binding and activity of the USP16 deubiquitinase at transcribed genes. Acts as an inhibitor of CGAS during mitosis: catalyzes phosphorylation of the N-terminus of CGAS during the G2-M transition, blocking CGAS liquid phase separation and activation, and thereby preventing CGAS-induced autoimmunity. Phosphorylates KRT5 during anaphase and telophase. Phosphorylates ATXN10 which promotes phosphorylation of ATXN10 by PLK1 and may play a role in the regulation of cytokinesis and stimulating the proteasomal degradation of ATXN10. The polypeptide is Aurora kinase B (AURKB) (Sus scrofa (Pig)).